The primary structure comprises 2266 residues: Little elongation complex subunit 1 (2266 aa).

Residues 23–186 are a coiled coil; sequence CASLQQNLNE…KQKNEKELRH (164 aa). 2 disordered regions span residues 223–259 and 517–540; these read GEGSRCVPEKPAKAITSSRVPGEDGTLPPTQGSPLRT and PAQEKEAAPGKSELCSSPLGKRPL. Over residues 250–259 the composition is skewed to polar residues; it reads PPTQGSPLRT. Ser255, Ser533, Ser558, and Ser589 each carry phosphoserine. The tract at residues 591–623 is disordered; the sequence is ELEKEKEDTQGFTLGESPESEDDDSGDGMDVAG. Residues 608–617 show a composition bias toward acidic residues; sequence PESEDDDSGD. A Phosphoserine modification is found at Ser707. At Thr832 the chain carries Phosphothreonine. Ser925 is modified (phosphoserine). Positions 925–955 are disordered; the sequence is SPEVSASRRKLDFNSPGGSSPVENSDCSTNS. Over residues 940–955 the composition is skewed to polar residues; that stretch reads PGGSSPVENSDCSTNS. Residue Ser958 is modified to Phosphoserine. 2 disordered regions span residues 977-1001 and 1107-1133; these read VQGDGQKQRQPQATDLDSSGTHGSE and TEVESEAFSCSEGSEQQDAPDDSQKNL. A compositionally biased stretch (polar residues) spans 984–998; that stretch reads QRQPQATDLDSSGTH. At Lys1218 the chain carries N6-acetyllysine. Disordered stretches follow at residues 1295–1372, 1467–1510, and 1543–1707; these read TTEN…PSAL, AEKS…KSRL, and NSKL…SASE. Composition is skewed to polar residues over residues 1306–1319, 1328–1344, 1487–1505, 1565–1588, and 1594–1605; these read RETTGSSSHASEPT, EGSSPISGMPQNENPQS, NNLSCPQEDVSSSGQSTNF, NKPVKTSASSRVETHQSEVAQSFS, and TKTQRSQTQTIL. Ser1588 bears the Phosphoserine mark. Composition is skewed to low complexity over residues 1609 to 1620 and 1637 to 1671; these read DTSTPTDCSPDT and APLIATPPRTSQPLSPLISSSSPSSPASPVGQVSP. Ser1617 carries the phosphoserine modification. Residue Thr1642 is modified to Phosphothreonine. Ser1692, Ser1697, Ser1699, Ser1701, Ser1712, Ser1838, and Ser1854 each carry phosphoserine. The disordered stretch occupies residues 1809-1902; the sequence is TGSSSGGDCN…AVSAVSQLPL (94 aa). The span at 1825-1843 shows a compositional bias: polar residues; sequence LGTQQDSSGKRTLSTSTLR. The segment covering 1889–1901 has biased composition (polar residues); it reads CSSPAVSAVSQLP. Phosphoserine is present on Ser1903.

Belongs to the ICE1 family. In terms of assembly, component of the little elongation complex (LEC), at least composed of ELL (ELL, ELL2 or ELL3), ZC3H8, ICE1 and ICE2. Interacts (via N-terminus domain) with ELL. Interacts (via C-terminus domain) with ICE2 and ZC3H8.

It localises to the nucleus. The protein localises to the cajal body. Functionally, component of the little elongation complex (LEC), a complex required to regulate small nuclear RNA (snRNA) gene transcription by RNA polymerase II and III. Specifically acts as a scaffold protein that promotes the LEC complex formation and recruitment and RNA polymerase II occupancy at snRNA genes in subnuclear bodies. The protein is Little elongation complex subunit 1 (ICE1) of Homo sapiens (Human).